Consider the following 523-residue polypeptide: ADP-ribosylation factor GTPase-activating protein 3 (523 aa).

The Arf-GAP domain occupies 10-126 (LAIFKRLRSV…IKTLATQATR (117 aa)). The C4-type zinc finger occupies 25–48 (CFDCGAKNPSWASISYGVFLCIDC). The interval 162–206 (GAMQASAQPESASSTPWGLETTPEKHEGGPGQGPSVEGLNTPGKA) is disordered. The segment covering 164–177 (MQASAQPESASSTP) has biased composition (polar residues). A phosphoserine mark is found at Ser231 and Ser241. A disordered region spans residues 248–269 (QAQAVDKRKEQEDLARGAPKEE). Residues Ser270, Ser274, and Ser331 each carry the phosphoserine modification. Residues 308 to 424 (GFGSCRSGIS…YEPIGSTDEA (117 aa)) are disordered. The segment covering 314-332 (SGISHSVTSDMQTIEQESP) has biased composition (polar residues). Positions 348-361 (SYFSSSSKWSEQSS) are enriched in low complexity. Phosphoserine is present on Ser377. The segment covering 385–396 (YWKKDSSRDPEP) has biased composition (basic and acidic residues). Ser435, Ser458, Ser460, Ser462, Ser464, and Ser465 each carry phosphoserine.

It localises to the cytoplasm. It is found in the golgi apparatus membrane. With respect to regulation, GAP activity stimulated by phosphatidylinositol 4,5-bisphosphate (PIP2). Its function is as follows. GTPase-activating protein (GAP) for ADP ribosylation factor 1 (ARF1). Hydrolysis of ARF1-bound GTP may lead to dissociation of coatomer from Golgi-derived membranes to allow fusion with target membranes. The chain is ADP-ribosylation factor GTPase-activating protein 3 (Arfgap3) from Mus musculus (Mouse).